The sequence spans 196 residues: Putative NADH dehydrogenase/NAD(P)H nitroreductase SGR_2476 (196 aa).

It belongs to the nitroreductase family. HadB/RutE subfamily. It depends on FMN as a cofactor.

This is Putative NADH dehydrogenase/NAD(P)H nitroreductase SGR_2476 from Streptomyces griseus subsp. griseus (strain JCM 4626 / CBS 651.72 / NBRC 13350 / KCC S-0626 / ISP 5235).